Consider the following 620-residue polypeptide: 1-deoxy-D-xylulose-5-phosphate synthase (620 aa).

Thiamine diphosphate-binding positions include His80 and 121-123; that span reads GHS. Asp152 is a binding site for Mg(2+). Residues 153-154, Asn181, Tyr288, and Glu370 contribute to the thiamine diphosphate site; that span reads GA. Asn181 provides a ligand contact to Mg(2+).

Belongs to the transketolase family. DXPS subfamily. In terms of assembly, homodimer. It depends on Mg(2+) as a cofactor. The cofactor is thiamine diphosphate.

The enzyme catalyses D-glyceraldehyde 3-phosphate + pyruvate + H(+) = 1-deoxy-D-xylulose 5-phosphate + CO2. The protein operates within metabolic intermediate biosynthesis; 1-deoxy-D-xylulose 5-phosphate biosynthesis; 1-deoxy-D-xylulose 5-phosphate from D-glyceraldehyde 3-phosphate and pyruvate: step 1/1. Catalyzes the acyloin condensation reaction between C atoms 2 and 3 of pyruvate and glyceraldehyde 3-phosphate to yield 1-deoxy-D-xylulose-5-phosphate (DXP). The polypeptide is 1-deoxy-D-xylulose-5-phosphate synthase (Salmonella arizonae (strain ATCC BAA-731 / CDC346-86 / RSK2980)).